The sequence spans 157 residues: N5-carboxyaminoimidazole ribonucleotide mutase (157 aa).

Substrate-binding residues include Ser8, Asp11, and Arg38.

This sequence belongs to the AIR carboxylase family. Class I subfamily.

The enzyme catalyses 5-carboxyamino-1-(5-phospho-D-ribosyl)imidazole + H(+) = 5-amino-1-(5-phospho-D-ribosyl)imidazole-4-carboxylate. Its pathway is purine metabolism; IMP biosynthesis via de novo pathway; 5-amino-1-(5-phospho-D-ribosyl)imidazole-4-carboxylate from 5-amino-1-(5-phospho-D-ribosyl)imidazole (N5-CAIR route): step 2/2. Its function is as follows. Catalyzes the conversion of N5-carboxyaminoimidazole ribonucleotide (N5-CAIR) to 4-carboxy-5-aminoimidazole ribonucleotide (CAIR). The chain is N5-carboxyaminoimidazole ribonucleotide mutase from Methanocaldococcus jannaschii (strain ATCC 43067 / DSM 2661 / JAL-1 / JCM 10045 / NBRC 100440) (Methanococcus jannaschii).